A 201-amino-acid polypeptide reads, in one-letter code: Small ribosomal subunit protein uS4c (201 aa).

One can recognise an S4 RNA-binding domain in the interval 89-149; the sequence is MRLDNILFRL…DKPKSGALIK (61 aa).

Belongs to the universal ribosomal protein uS4 family. Part of the 30S ribosomal subunit. Contacts protein S5. The interaction surface between S4 and S5 is involved in control of translational fidelity.

Its subcellular location is the plastid. One of the primary rRNA binding proteins, it binds directly to 16S rRNA where it nucleates assembly of the body of the 30S subunit. Its function is as follows. With S5 and S12 plays an important role in translational accuracy. The chain is Small ribosomal subunit protein uS4c (rps4) from Cuscuta reflexa (Southern Asian dodder).